Reading from the N-terminus, the 506-residue chain is UPF0371 protein FN1121 (506 aa).

This sequence belongs to the UPF0371 family.

The chain is UPF0371 protein FN1121 from Fusobacterium nucleatum subsp. nucleatum (strain ATCC 25586 / DSM 15643 / BCRC 10681 / CIP 101130 / JCM 8532 / KCTC 2640 / LMG 13131 / VPI 4355).